Reading from the N-terminus, the 37-residue chain is Large ribosomal subunit protein bL36 (37 aa).

The protein belongs to the bacterial ribosomal protein bL36 family.

The chain is Large ribosomal subunit protein bL36 from Methylibium petroleiphilum (strain ATCC BAA-1232 / LMG 22953 / PM1).